A 173-amino-acid chain; its full sequence is Photosystem I assembly protein Ycf3 (173 aa).

TPR repeat units lie at residues Ala35–Thr68, Gly72–Leu105, and Gly120–Asn153.

It belongs to the Ycf3 family.

It is found in the cellular thylakoid membrane. Essential for the assembly of the photosystem I (PSI) complex. May act as a chaperone-like factor to guide the assembly of the PSI subunits. In Trichormus variabilis (strain ATCC 29413 / PCC 7937) (Anabaena variabilis), this protein is Photosystem I assembly protein Ycf3.